Here is a 297-residue protein sequence, read N- to C-terminus: Aspartate carbamoyltransferase catalytic subunit (297 aa).

Carbamoyl phosphate contacts are provided by arginine 48 and threonine 49. Lysine 76 contacts L-aspartate. Arginine 98, histidine 129, and glutamine 132 together coordinate carbamoyl phosphate. L-aspartate-binding residues include arginine 162 and arginine 214. Residues alanine 257 and proline 258 each coordinate carbamoyl phosphate.

The protein belongs to the aspartate/ornithine carbamoyltransferase superfamily. ATCase family. As to quaternary structure, heterododecamer (2C3:3R2) of six catalytic PyrB chains organized as two trimers (C3), and six regulatory PyrI chains organized as three dimers (R2).

The catalysed reaction is carbamoyl phosphate + L-aspartate = N-carbamoyl-L-aspartate + phosphate + H(+). It participates in pyrimidine metabolism; UMP biosynthesis via de novo pathway; (S)-dihydroorotate from bicarbonate: step 2/3. Catalyzes the condensation of carbamoyl phosphate and aspartate to form carbamoyl aspartate and inorganic phosphate, the committed step in the de novo pyrimidine nucleotide biosynthesis pathway. The polypeptide is Aspartate carbamoyltransferase catalytic subunit (Leuconostoc mesenteroides subsp. mesenteroides (strain ATCC 8293 / DSM 20343 / BCRC 11652 / CCM 1803 / JCM 6124 / NCDO 523 / NBRC 100496 / NCIMB 8023 / NCTC 12954 / NRRL B-1118 / 37Y)).